Consider the following 257-residue polypeptide: LexA repressor (257 aa).

Positions 64–84 (FREIGEAAGLKSPSSVKHQLQ) form a DNA-binding region, H-T-H motif. Active-site for autocatalytic cleavage activity residues include S181 and K218.

The protein belongs to the peptidase S24 family. In terms of assembly, homodimer.

The enzyme catalyses Hydrolysis of Ala-|-Gly bond in repressor LexA.. Its function is as follows. Represses a number of genes involved in the response to DNA damage (SOS response), including recA and lexA. In the presence of single-stranded DNA, RecA interacts with LexA causing an autocatalytic cleavage which disrupts the DNA-binding part of LexA, leading to derepression of the SOS regulon and eventually DNA repair. The sequence is that of LexA repressor from Bifidobacterium adolescentis (strain ATCC 15703 / DSM 20083 / NCTC 11814 / E194a).